A 313-amino-acid polypeptide reads, in one-letter code: Homoserine O-succinyltransferase (313 aa).

The active-site Acyl-thioester intermediate is the cysteine 142. Residues lysine 163 and serine 192 each contribute to the substrate site. Histidine 235 functions as the Proton acceptor in the catalytic mechanism. Glutamate 237 is an active-site residue. Position 249 (arginine 249) interacts with substrate.

Belongs to the MetA family.

It is found in the cytoplasm. The catalysed reaction is L-homoserine + succinyl-CoA = O-succinyl-L-homoserine + CoA. It functions in the pathway amino-acid biosynthesis; L-methionine biosynthesis via de novo pathway; O-succinyl-L-homoserine from L-homoserine: step 1/1. Functionally, transfers a succinyl group from succinyl-CoA to L-homoserine, forming succinyl-L-homoserine. This is Homoserine O-succinyltransferase from Vibrio vulnificus (strain YJ016).